Reading from the N-terminus, the 305-residue chain is Probable lipid kinase YegS-like (305 aa).

The DAGKc domain maps to 2–134; sequence HPPAPALLII…DLAKVNDQRY (133 aa). ATP is bound by residues Thr40, 66-72, and Thr95; that span reads GDGTINE. 3 residues coordinate Mg(2+): Leu215, Asp218, and Leu220. The active-site Proton acceptor is the Glu271.

It belongs to the diacylglycerol/lipid kinase family. YegS lipid kinase subfamily. It depends on Mg(2+) as a cofactor. Ca(2+) is required as a cofactor.

The protein localises to the cytoplasm. Probably phosphorylates lipids; the in vivo substrate is unknown. In Serratia proteamaculans (strain 568), this protein is Probable lipid kinase YegS-like.